A 389-amino-acid polypeptide reads, in one-letter code: Probable nitrate transporter NarT (389 aa).

12 helical membrane passes run 14 to 34 (TLSL…MPFI), 45 to 65 (ISII…PFGY), 69 to 89 (IVGA…PIFF), 97 to 117 (GMLM…SVGV), 139 to 159 (GNIG…IIGW), 161 to 181 (TTVR…FIFG), 211 to 231 (WYFI…NYLV), 246 to 266 (GVFI…GDKF), 268 to 288 (AVKV…ILGI), 294 to 314 (LFTV…GLIF), 331 to 351 (IVSM…TYVA), and 353 to 373 (LTGS…IALF).

This sequence belongs to the major facilitator superfamily. Nitrate/nitrite porter (TC 2.A.1.8) family.

Its subcellular location is the cell membrane. Probably required for nitrate uptake under anoxic conditions. Also possibly involved in excretion of nitrite produced by the dissimilatory reduction of nitrate. In Staphylococcus aureus (strain USA300), this protein is Probable nitrate transporter NarT (narT).